Here is a 405-residue protein sequence, read N- to C-terminus: Argininosuccinate synthase (405 aa).

ATP-binding positions include 10 to 18 (AYSGGLDTS) and Ala37. Tyr88 and Ser93 together coordinate L-citrulline. Gly118 is a binding site for ATP. L-aspartate is bound by residues Thr120, Asn124, and Asp125. Asn124 contributes to the L-citrulline binding site. L-citrulline is bound by residues Arg128, Ser179, Ser188, Glu264, and Tyr276.

It belongs to the argininosuccinate synthase family. Type 1 subfamily. As to quaternary structure, homotetramer.

It is found in the cytoplasm. The enzyme catalyses L-citrulline + L-aspartate + ATP = 2-(N(omega)-L-arginino)succinate + AMP + diphosphate + H(+). It functions in the pathway amino-acid biosynthesis; L-arginine biosynthesis; L-arginine from L-ornithine and carbamoyl phosphate: step 2/3. The sequence is that of Argininosuccinate synthase from Pseudomonas syringae pv. tomato (strain ATCC BAA-871 / DC3000).